A 401-amino-acid chain; its full sequence is N-acetyllactosaminide beta-1,6-N-acetylglucosaminyl-transferase (401 aa).

The Cytoplasmic portion of the chain corresponds to M1 to Y7. Residues F8–G28 traverse the membrane as a helical; Signal-anchor for type II membrane protein segment. Topologically, residues G29 to F401 are lumenal. N-linked (GlcNAc...) asparagine glycans are attached at residues N37, N255, N315, and N389.

This sequence belongs to the glycosyltransferase 14 family.

It is found in the golgi apparatus membrane. The catalysed reaction is a beta-D-Gal-(1-&gt;4)-beta-D-GlcNAc-(1-&gt;3)-beta-D-Gal-(1-&gt;4)-beta-D-GlcNAc derivative + UDP-N-acetyl-alpha-D-glucosamine = a beta-D-Gal-(1-&gt;4)-beta-D-GlcNAc-(1-&gt;3)-[beta-D-GlcNAc-(1-&gt;6)]-beta-D-Gal-(1-&gt;4)-N-acetyl-beta-D-glucosaminyl derivative + UDP + H(+). The protein operates within protein modification; protein glycosylation. Its function is as follows. Branching enzyme that converts linear into branched poly-N-acetyllactosaminoglycans. Introduces the blood group I antigen during embryonic development. It is closely associated with the development and maturation of erythroid cells. In Mus musculus (Mouse), this protein is N-acetyllactosaminide beta-1,6-N-acetylglucosaminyl-transferase (Gcnt2).